Consider the following 250-residue polypeptide: Ino eighty subunit 3 (250 aa).

Positions 29–70 are disordered; that stretch reads PDFLEKDPHHKKFHNADGLNQQGSSTPSTATDANAASTASTH. Positions 52–70 are enriched in low complexity; it reads SSTPSTATDANAASTASTH. Serine 157 and serine 211 each carry phosphoserine.

Component of the chromatin-remodeling INO80 complex, at least composed of ARP4, ARP5, ARP8, RVB1, RVB2, TAF14, NHP10, IES1, IES3, IES4, IES6, ACT1, IES2, IES5 and INO80.

The protein localises to the nucleus. In terms of biological role, probably involved in transcription regulation via its interaction with the INO80 complex, a chromatin-remodeling complex. This is Ino eighty subunit 3 (IES3) from Saccharomyces cerevisiae (strain ATCC 204508 / S288c) (Baker's yeast).